Reading from the N-terminus, the 868-residue chain is Paladin (868 aa).

G2 carries the N-myristoyl glycine lipid modification.

This sequence belongs to the paladin family.

It localises to the cytoplasm. The protein resides in the cytosol. The chain is Paladin (PALD1) from Gallus gallus (Chicken).